The following is a 192-amino-acid chain: Transmembrane protein 276 (192 aa).

The N-terminal stretch at 1 to 32 (MVSKPRTEWSTVLSHLVLAGVSLHAAVSSVQS) is a signal peptide. The next 4 membrane-spanning stretches (helical) occupy residues 35 to 55 (GAAAGFLLQTFAAIIMLAPGP), 63 to 83 (AGAWVATVIGLPLLAFDFHWV), 92 to 112 (LLLGGGMVLAVAGDHLGPEGC), and 114 to 134 (VAGQAVLLVVAVTILIVAVFT).

Its subcellular location is the membrane. The sequence is that of Transmembrane protein 276 from Mus musculus (Mouse).